Reading from the N-terminus, the 489-residue chain is uncharacterized protein (489 aa).

Thr-26 is subject to Phosphothreonine. At Ser-27 the chain carries Phosphoserine. The next 3 membrane-spanning stretches (helical) occupy residues 63–83, 182–202, and 221–241; these read IVYL…IEFA, LVWS…ILCA, and VFKL…IAFL. 3 disordered regions span residues 260–312, 401–435, and 450–489; these read PKTS…APLE, STLL…VPPS, and PSIN…PVVH. Residue Ser-263 is modified to Phosphoserine. Residues 268–282 show a composition bias toward polar residues; sequence QRGTSSSQPSENDAN. Residues 450–465 are compositionally biased toward polar residues; the sequence is PSINNVGGSTAPSVNN. Over residues 477 to 489 the composition is skewed to low complexity; it reads SRSSTLTERPVVH.

The protein resides in the endoplasmic reticulum membrane. This is an uncharacterized protein from Schizosaccharomyces pombe (strain 972 / ATCC 24843) (Fission yeast).